A 225-amino-acid polypeptide reads, in one-letter code: Peptidyl-tRNA hydrolase (225 aa).

Y14 contacts tRNA. H19 serves as the catalytic Proton acceptor. TRNA-binding residues include F64, N66, and N112. Residues 182–225 form a disordered region; that stretch reads AVALRMQPPKPEKPKPAAKAPEAQAPEAAPDERSALQKLADRFR. A compositionally biased stretch (low complexity) spans 198 to 209; it reads AAKAPEAQAPEA. Over residues 211–225 the composition is skewed to basic and acidic residues; the sequence is PDERSALQKLADRFR.

This sequence belongs to the PTH family. Monomer.

The protein localises to the cytoplasm. It carries out the reaction an N-acyl-L-alpha-aminoacyl-tRNA + H2O = an N-acyl-L-amino acid + a tRNA + H(+). Its function is as follows. Hydrolyzes ribosome-free peptidyl-tRNAs (with 1 or more amino acids incorporated), which drop off the ribosome during protein synthesis, or as a result of ribosome stalling. Catalyzes the release of premature peptidyl moieties from peptidyl-tRNA molecules trapped in stalled 50S ribosomal subunits, and thus maintains levels of free tRNAs and 50S ribosomes. The chain is Peptidyl-tRNA hydrolase from Cereibacter sphaeroides (strain ATCC 17029 / ATH 2.4.9) (Rhodobacter sphaeroides).